The sequence spans 372 residues: MALNDFHVSEPYTLGIELEMQVINPPGYDLSQDSSTLIDAVKPQLTAGEIKHDITESMLEMATGVCRDIDQAAAQLSAMQHVILQAASEHHLGICGGGTHPFQKWQRQEVCDNERYQRTLENFGYLIQQATVFGQHVHVGCANGDDAIYLLHGLSHFVPHFIALSAASPYMQGADTRFACARLNIFSAFPDNGPMPWVSNWQEFTGLFRRLSYTTMIDSIKDLHWDIRPSPAFGTVEVRVMDTPLTLDHAINMAGLIQATAHWLLTERPFKPQEQDYLLYKFNRFQACRYGLEGVLTDAYTGDRRRLADDTLRLLDNVTPSARKLGADSAIDALRLQVKKGGNEAQYMREFIADGGSLIGLVQKHCEIWAGQ.

It belongs to the glutamate--cysteine ligase type 2 family. YbdK subfamily. As to quaternary structure, homodimer.

The catalysed reaction is L-cysteine + L-glutamate + ATP = gamma-L-glutamyl-L-cysteine + ADP + phosphate + H(+). ATP-dependent carboxylate-amine ligase which exhibits weak glutamate--cysteine ligase activity. This chain is Putative glutamate--cysteine ligase 2 (ybdK), found in Salmonella paratyphi B (strain ATCC BAA-1250 / SPB7).